Here is a 999-residue protein sequence, read N- to C-terminus: Probable hemoglobin and hemoglobin-haptoglobin-binding protein 4 (999 aa).

The N-terminal stretch at 1 to 24 is a signal peptide; the sequence is MTNFRLNVLAYSVMLGLTASVAYA. A disordered region spans residues 25-52; it reads EPTNQPTNQPTNQPTNQPTNQPTNQNSN. Repeat copies occupy residues 26–29, 30–33, 34–37, 38–41, 42–45, and 46–49. The interval 26–49 is 6 X 4 AA tandem repeats of P-T-N-Q; sequence PTNQPTNQPTNQPTNQPTNQPTNQ. Residues 26–50 show a composition bias toward low complexity; sequence PTNQPTNQPTNQPTNQPTNQPTNQN. The TonB box motif lies at 58 to 65; the sequence is EQINVLGS. A TBDR plug domain is found at 68–195; that stretch reads NNDNTPPKIA…LGGAVLFETK (128 aa). Residues 203 to 999 form the TBDR beta-barrel domain; the sequence is EKDWHIGYKA…NYKLSAEITF (797 aa). The short motif at 982 to 999 is the TonB C-terminal box element; sequence NRFYSPGRNYKLSAEITF.

It belongs to the TonB-dependent receptor family. Hemoglobin/haptoglobin binding protein subfamily.

The protein resides in the cell outer membrane. In terms of biological role, acts as a receptor for hemoglobin or the hemoglobin/haptoglobin complex of the human host and is required for heme uptake. The protein is Probable hemoglobin and hemoglobin-haptoglobin-binding protein 4 of Haemophilus influenzae (strain ATCC 51907 / DSM 11121 / KW20 / Rd).